Here is a 543-residue protein sequence, read N- to C-terminus: MSFVTAAPEMLATAAQNVANIGTSLSAANATAAASTTSVLAAGADEVSQAIARLFSDYATHYQSLNAQAAAFHHSFVQTLNAAGGAYSSAEAANASAQALEQNLLAVINAPAQALFGRPLIGNGANGTAASPNGGDGGILYGNGGNGFSQTTAGVAGGAGGSAGLIGNGGNGGAGGAGAAGGAGGAGGWLLGNGGAGGPGGPTDVPAGTGGAGGAGGDAPLIGWGGNGGPGGFAAFGNGGAGGNGGASGSLFGVGGAGGVGGSSEDVGGTGGAGGAGRGLFLGLGGDGGAGGTSNNNGGDGGAGGTAGGRLFSLGGDGGNGGAGTAIGSNAGDGGAGGDSSALIGYAQGGSGGLGGFGESTGGDGGLGGAGAVLIGTGVGGFGGLGGGSNGTGGAGGAGGTGATLIGLGAGGGGGIGGFAVNVGNGVGGLGGQGGQGAALIGLGAGGAGGAGGATVVGLGGNGGDGGDGGGLFSIGVGGDGGNAGNGAMPANGGNGGNAGVIANGSFAPSFVGFGGNGGNGVNGGTGGSGGILFGANGANGPS.

The PE domain occupies 1-93; that stretch reads MSFVTAAPEM…GGAYSSAEAA (93 aa). The disordered stretch occupies residues 194–214; the sequence is GGAGGPGGPTDVPAGTGGAGG.

It belongs to the mycobacterial PE family. PGRS subfamily.

This is an uncharacterized protein from Mycobacterium tuberculosis (strain CDC 1551 / Oshkosh).